The following is a 58-amino-acid chain: Large ribosomal subunit protein eL37 (58 aa).

Zn(2+)-binding residues include Cys20, Cys23, Cys35, and Cys38. The C4-type zinc finger occupies Cys20–Cys38. The segment at Gly39–Asn58 is disordered.

This sequence belongs to the eukaryotic ribosomal protein eL37 family. Zn(2+) serves as cofactor.

Its function is as follows. Binds to the 23S rRNA. In Halorubrum lacusprofundi (strain ATCC 49239 / DSM 5036 / JCM 8891 / ACAM 34), this protein is Large ribosomal subunit protein eL37.